A 506-amino-acid chain; its full sequence is Cobyric acid synthase (506 aa).

One can recognise a GATase cobBQ-type domain in the interval 254–453; it reads DLDIAVIRLP…IHGIFESDSF (200 aa). The active-site Nucleophile is C334. Residue H445 is part of the active site.

It belongs to the CobB/CobQ family. CobQ subfamily.

Its pathway is cofactor biosynthesis; adenosylcobalamin biosynthesis. Its function is as follows. Catalyzes amidations at positions B, D, E, and G on adenosylcobyrinic A,C-diamide. NH(2) groups are provided by glutamine, and one molecule of ATP is hydrogenolyzed for each amidation. This Dehalococcoides mccartyi (strain ATCC BAA-2266 / KCTC 15142 / 195) (Dehalococcoides ethenogenes (strain 195)) protein is Cobyric acid synthase.